The following is a 503-amino-acid chain: UDP-N-acetylmuramoylalanine--D-glutamate ligase (503 aa).

129–135 (GTNGKTT) contacts ATP.

The protein belongs to the MurCDEF family.

It is found in the cytoplasm. The enzyme catalyses UDP-N-acetyl-alpha-D-muramoyl-L-alanine + D-glutamate + ATP = UDP-N-acetyl-alpha-D-muramoyl-L-alanyl-D-glutamate + ADP + phosphate + H(+). Its pathway is cell wall biogenesis; peptidoglycan biosynthesis. Functionally, cell wall formation. Catalyzes the addition of glutamate to the nucleotide precursor UDP-N-acetylmuramoyl-L-alanine (UMA). The protein is UDP-N-acetylmuramoylalanine--D-glutamate ligase of Burkholderia vietnamiensis (strain G4 / LMG 22486) (Burkholderia cepacia (strain R1808)).